The chain runs to 371 residues: DNA replication and repair protein RecF (371 aa).

30–37 (GKNGQGKT) is an ATP binding site.

The protein belongs to the RecF family.

It localises to the cytoplasm. Its function is as follows. The RecF protein is involved in DNA metabolism; it is required for DNA replication and normal SOS inducibility. RecF binds preferentially to single-stranded, linear DNA. It also seems to bind ATP. The chain is DNA replication and repair protein RecF from Clostridioides difficile (strain 630) (Peptoclostridium difficile).